Consider the following 208-residue polypeptide: MARYTEAKCRICRREGAKLFLKGDRCYTDKCAHERRPYAPGQHGRIRKKMSDYAVQLREKQKTRKMYGILEEQFRDYFKRADMQKGVTGENLLSALERRLDNTIYRLGFATSRNQARQLVRHGLFTLNGRRVNIPSLQVKVGDVIEVRERNRQSPIILEAQQVIARRGTPAWLEVEGEKLKGKVIALPTREDVQFPINEQLIVELYSK.

An S4 RNA-binding domain is found at 98 to 161 (RRLDNTIYRL…RQSPIILEAQ (64 aa)).

The protein belongs to the universal ribosomal protein uS4 family. In terms of assembly, part of the 30S ribosomal subunit. Contacts protein S5. The interaction surface between S4 and S5 is involved in control of translational fidelity.

One of the primary rRNA binding proteins, it binds directly to 16S rRNA where it nucleates assembly of the body of the 30S subunit. In terms of biological role, with S5 and S12 plays an important role in translational accuracy. The protein is Small ribosomal subunit protein uS4 of Solidesulfovibrio magneticus (strain ATCC 700980 / DSM 13731 / RS-1) (Desulfovibrio magneticus).